The primary structure comprises 227 residues: MHIERLDFENSPYLGVFGVATDRVVLVREGLQEKKLEVIREVLKVPVIEASIMKSRIIGTLATGNSNAILVPWYVWDTEIERIKSAFKEYGIETEIVPFRTKYTALGNLILTNDKAALVSAKFSRDEAKEIGDILGVEVERGLIAGLHAVGSAGVVTNKGGLVHPEASDEELEWLSELFKVDVYVGTANMGVPYVGTCMLANSNGVVVGHLTTGPEIVKIEEALGLI.

Belongs to the eIF-6 family.

Its function is as follows. Binds to the 50S ribosomal subunit and prevents its association with the 30S ribosomal subunit to form the 70S initiation complex. This Pyrococcus abyssi (strain GE5 / Orsay) protein is Translation initiation factor 6.